A 313-amino-acid chain; its full sequence is Protoheme IX farnesyltransferase (313 aa).

The next 8 membrane-spanning stretches (helical) occupy residues 23-43 (ILAY…VTTI), 56-76 (PLLI…ANTL), 107-127 (LIFG…TANL), 128-148 (LSGL…TLVL), 155-175 (NVVW…SAVT), 182-202 (ALVM…ALAM), 243-263 (LALA…VWFL), and 291-311 (YLAV…PTLF).

The protein belongs to the UbiA prenyltransferase family. Protoheme IX farnesyltransferase subfamily.

The protein localises to the cell membrane. It catalyses the reaction heme b + (2E,6E)-farnesyl diphosphate + H2O = Fe(II)-heme o + diphosphate. It functions in the pathway porphyrin-containing compound metabolism; heme O biosynthesis; heme O from protoheme: step 1/1. Functionally, converts heme B (protoheme IX) to heme O by substitution of the vinyl group on carbon 2 of heme B porphyrin ring with a hydroxyethyl farnesyl side group. The protein is Protoheme IX farnesyltransferase of Mycobacteroides abscessus (strain ATCC 19977 / DSM 44196 / CCUG 20993 / CIP 104536 / JCM 13569 / NCTC 13031 / TMC 1543 / L948) (Mycobacterium abscessus).